The following is a 650-amino-acid chain: DNA gyrase subunit B (650 aa).

Residues 400-414 are compositionally biased toward basic and acidic residues; that stretch reads RRSQEARELTRRKSP. The segment at 400–422 is disordered; sequence RRSQEARELTRRKSPFDSGSLPG. In terms of domain architecture, Toprim spans 435 to 549; it reads SELYIVEGDS…QGNIFIAQPP (115 aa). Residues E441, D514, and D516 each contribute to the Mg(2+) site.

It belongs to the type II topoisomerase GyrB family. Heterotetramer, composed of two GyrA and two GyrB chains. In the heterotetramer, GyrA contains the active site tyrosine that forms a transient covalent intermediate with DNA, while GyrB binds cofactors and catalyzes ATP hydrolysis. The cofactor is Mg(2+). Mn(2+) serves as cofactor. It depends on Ca(2+) as a cofactor.

Its subcellular location is the cytoplasm. It carries out the reaction ATP-dependent breakage, passage and rejoining of double-stranded DNA.. Its function is as follows. A type II topoisomerase that negatively supercoils closed circular double-stranded (ds) DNA in an ATP-dependent manner to modulate DNA topology and maintain chromosomes in an underwound state. Negative supercoiling favors strand separation, and DNA replication, transcription, recombination and repair, all of which involve strand separation. Also able to catalyze the interconversion of other topological isomers of dsDNA rings, including catenanes and knotted rings. Type II topoisomerases break and join 2 DNA strands simultaneously in an ATP-dependent manner. The chain is DNA gyrase subunit B from Mycoplasma genitalium (strain ATCC 33530 / DSM 19775 / NCTC 10195 / G37) (Mycoplasmoides genitalium).